The sequence spans 652 residues: Carboxypeptidase S1 homolog A (652 aa).

The N-terminal stretch at 1–19 is a signal peptide; it reads MRLAASIAVALPVIGAASA. C50 and C121 form a disulfide bridge. N-linked (GlcNAc...) asparagine glycosylation is found at N77, N132, N161, N168, N184, and N202. S238 is an active-site residue. Residues N260, N299, N347, and N410 are each glycosylated (N-linked (GlcNAc...) asparagine). 2 disulfide bridges follow: C325-C361 and C332-C354. The active site involves D458. A substrate-binding site is contributed by C461. N-linked (GlcNAc...) asparagine glycosylation is found at N474, N492, and N505. H516 is an active-site residue. E517 contacts substrate. N594 is a glycosylation site (N-linked (GlcNAc...) asparagine). Positions 608-628 are disordered; the sequence is AASKGNPPPTTTSSPTASPTA. The span at 618–628 shows a compositional bias: low complexity; it reads TTSSPTASPTA. Residue G629 is the site of GPI-anchor amidated glycine attachment. The propeptide at 630–652 is removed in mature form; sequence SAMLKAPVAMLAISALTVLAFYL.

It belongs to the peptidase S10 family.

The protein resides in the cell membrane. The enzyme catalyses Preferential release of a C-terminal arginine or lysine residue.. Functionally, extracellular serine carboxypeptidase that contributes to pathogenicity. The chain is Carboxypeptidase S1 homolog A (SCPA) from Trichophyton verrucosum (strain HKI 0517).